We begin with the raw amino-acid sequence, 203 residues long: Cardiotrophin-1 (203 aa).

This sequence belongs to the IL-6 superfamily. In terms of tissue distribution, expressed in the ventricle and atrium of adult rats. Also detected in the lung, kidney, liver, skeletal muscle, stomach and urinary bladder. Not detected in brain, colon, testis, spleen or thymus. Overexpressed in the ventricles in the case of hypertension and hypertrophy.

It is found in the secreted. In terms of biological role, induces cardiac myocyte hypertrophy in vitro. Binds to and activates the ILST/gp130 receptor. In Rattus norvegicus (Rat), this protein is Cardiotrophin-1 (Ctf1).